A 1799-amino-acid polypeptide reads, in one-letter code: Putative neural-cadherin 2 (1799 aa).

N-linked (GlcNAc...) asparagine glycans are attached at residues asparagine 13, asparagine 64, asparagine 86, asparagine 118, asparagine 195, asparagine 260, asparagine 264, asparagine 283, and asparagine 377. Cadherin domains follow at residues 37-136, 137-252, 253-364, 368-485, 486-590, 590-709, and 708-812; these read DRFL…PPVF, DRQT…APQF, PQGI…PPQF, EWVT…VPKF, DREH…APTF, FAQD…QPGS, and GSKS…AGSM. 5 N-linked (GlcNAc...) asparagine glycosylation sites follow: asparagine 601, asparagine 793, asparagine 910, asparagine 948, and asparagine 969. The EGF-like 1 domain occupies 973-1010; the sequence is QDHNCRTHLCYNGGRCVETRNGPKCVACPVGYNGPRCQ. 7 cysteine pairs are disulfide-bonded: cysteine 977/cysteine 988, cysteine 982/cysteine 997, cysteine 1000/cysteine 1009, cysteine 1191/cysteine 1217, cysteine 1224/cysteine 1239, cysteine 1233/cysteine 1248, and cysteine 1250/cysteine 1259. Positions 1011 to 1217 constitute a Laminin G-like 1 domain; that stretch reads QSTRSFRGNG…ALARNSFPAC (207 aa). The 41-residue stretch at 1220-1260 folds into the EGF-like 2 domain; that stretch reads TDEVCLKTEHTARCWEHGNCVASLVQAKCHCQPGWMGPGCN. Positions 1263-1454 constitute a Laminin G-like 2 domain; sequence TIPTTFKAQS…TMARNLERNC (192 aa). N-linked (GlcNAc...) asparagine glycosylation is found at asparagine 1376 and asparagine 1437. 4 disulfides stabilise this stretch: cysteine 1419–cysteine 1454, cysteine 1501–cysteine 1512, cysteine 1506–cysteine 1523, and cysteine 1525–cysteine 1534. Residues 1497 to 1535 form the EGF-like 3; calcium-binding domain; the sequence is DRNECLDLPCLNGATCINLEPRLRYRCICPEGYWGENCE. The chain crosses the membrane as a helical span at residues 1549–1569; it reads ALGAIFVCLIIILILALIFVL. Residues 1726–1799 form a disordered region; sequence ASSQLPSDGG…PLPEVDKVVL (74 aa). Composition is skewed to gly residues over residues 1733–1744, 1752–1763, and 1775–1786; these read DGGGGSGDGPGP, LGGGGTGGGSGI, and SGAGPGGGGGSS.

Its subcellular location is the cell membrane. Functionally, cadherins are calcium-dependent cell adhesion proteins. They preferentially interact with themselves in a homophilic manner in connecting cells. In Drosophila melanogaster (Fruit fly), this protein is Putative neural-cadherin 2 (CadN2).